The primary structure comprises 301 residues: B3 domain-containing protein At5g18090 (301 aa).

The segment at residues 18 to 113 (FFKILRSADL…CFTVDIYQID (96 aa)) is a DNA-binding region (TF-B3 1). Disordered regions lie at residues 123–142 (SATI…NNIY) and 153–194 (SWSE…KMKV). Basic and acidic residues predominate over residues 133–142 (NKREQRNNIY). The TF-B3 2 DNA-binding region spans 209–301 (VPEFTLTIKK…PTEMLVRVSK (93 aa)).

The protein localises to the nucleus. The chain is B3 domain-containing protein At5g18090 from Arabidopsis thaliana (Mouse-ear cress).